A 637-amino-acid polypeptide reads, in one-letter code: MIKVTLKDGKVMEFENTTTPGDVAKAISPGLYKKAISAKINGKRAELMTNIDKDCNLEILTFDDEDGKWTLRHTASHILAQAIKRLYPEAKLAIGPAIDSGFYYDIDADFSFTEEMFAKIEKEMNKIIKENLKLERFELPREKAIEYMEEKKEPYKVELIKDLPEDAVISFYKQGEFVDLCAGPHVESTAKVKVIKLMSVAGAYWRGNEKNKMLQRIYGTAFTKKADLDDYINMLEEAKKRDHRKIGKELDLFTMHEEGPGFPFFHPKGMVLKNLLLNYWREVHDKAGYDEISTPIILNEALWHQSGHWDHYKENMYFTKIDEADYAIKPMNCPGSILVYKDNIHSYRELPIKLAEIGLVHRHEKSGALHGLMRVRCFNQDDAHIFMTKEQITEEILGVIKLIDSFYKVFGFEYYVELSTRPEDSMGSDEDWEAATNGLINALNAANLEYIVNEGDGAFYGPKIDFHLKDCIGRTWQCGTIQLDFQMPERFDINYIGADGEKHRPVMVHRVVFGSIERFIGILIEHYAGAFPTWLAPVQVKVMNITDSQVEYVDAISEKLKEAGIRVEKDVRNEKIGYKIREAQLKKVPYMIVIGDKEIKEGIISVRSRKEGDLGSMNIEDFIFRINAEVKEKISSI.

Residues 1 to 61 enclose the TGS domain; the sequence is MIKVTLKDGK…DKDCNLEILT (61 aa). Residues 242 to 532 are catalytic; sequence DHRKIGKELD…LIEHYAGAFP (291 aa). Residues C333, H384, and H509 each coordinate Zn(2+).

The protein belongs to the class-II aminoacyl-tRNA synthetase family. In terms of assembly, homodimer. Zn(2+) serves as cofactor.

The protein localises to the cytoplasm. It catalyses the reaction tRNA(Thr) + L-threonine + ATP = L-threonyl-tRNA(Thr) + AMP + diphosphate + H(+). Its function is as follows. Catalyzes the attachment of threonine to tRNA(Thr) in a two-step reaction: L-threonine is first activated by ATP to form Thr-AMP and then transferred to the acceptor end of tRNA(Thr). Also edits incorrectly charged L-seryl-tRNA(Thr). The polypeptide is Threonine--tRNA ligase (Clostridium acetobutylicum (strain ATCC 824 / DSM 792 / JCM 1419 / IAM 19013 / LMG 5710 / NBRC 13948 / NRRL B-527 / VKM B-1787 / 2291 / W)).